Here is a 1345-residue protein sequence, read N- to C-terminus: MENWQATEILPKIEAPLNIFNDIKTYTAEQLFDNLRIYFGDDPSRYNISFEALLGIYCNKIEWINFFTTPIAVAANVIRFNDVSRMTLGKVLFFIQLPRVATGNDVTASKETTIMVAKHSEKHPINISFDLSAACLEHLENTFKNTVIDQILNINALHTVLRSLKNSADSLERGLIHAFMQTLLRKSPPQFIVLTMNENKVHNKQALSRVQRSNMFQSLKNRLLTSLFFLNRNNNISYIYRILNDMMESVTESILNDTNNYTSKENVPLDGVLLGPIGSIQKLTSILSQYISTQVVSAPISYGHFIMGKENAVTAIAYRAIMADFTQFTVNAGTEQQDTNNKSEIFDKSRAYADLKLNTLKLGDKLVAFDHLHKVYKNTDVNDPLEQSLQLTFFFPLGIYIPSETGFSTMETRVKLNDTMENNLPTSVFFHNKDQVVQRIDFADILPSVCHPIVHDSTIVERLMKSEPLPTGHRFSQLCQLKITRENPARILQTLYNLYESRQEVPKNTNVLKNELNIEDFYKPDNPTLPTERHPFFDLTYIQKNRATEVLCTPRIMIGNIPLPLAPVSFHEARTNQILEHAKTNCQNYDFTLKIVTESLTSGSYPELAYVIETLVHGNKHAFMILKQVISQCISYWFNMKHILLFCNSFEMIMLISNHMGDELIPGAAFAHYRNLVSLIRLVKRTISISNLNEQLCGEPLVNFANALFDGRLFCPFVHTMPRNDTNAKITADDTPLTQNTVRVRNYEISDVQRMNLIDSSVVFTDNDRPSNETTILSKIFYFCVLPALSNNKACGAGVNVKELVLDLFYTEPFISPDDYFQENPITSDVLMSLIREGMGPGYTVANTSCIAKQLFKSLIYINENTKILEVEVSLDPAQRHGNSVHFQSLQHILYNGLCLISPITTLRRYYQPIPFHRFFSDPGICGTMNADIQVFLNTFPHCQRNDGGFPLPPPLALEFYNWQRTPFSVYSAFCPNSLLSIMTLAAMHSKLSPVAIAIQSKNKIHPGFAATLVRTDNFDVECLLYSSRAATSIILDDPTVTAEAKDIATTYNFTQHLSFVDMGLGFSSTTATANLKRIKSDMGSKIQNLFSAFPIHAFTNADINTWIRHHVGIEKPNPSESEALNIITFGGINKNPPSILLHGQQAICEVILTPVTTNINFFKSPHNPRGRESCMMGTDPHNEEAARKALYDHTQTDSDTFAATTNPWASLPGSLGDILYNTAHREQLCYNPKTYSPNAQFFTESDILKTNKMMYKVISEYCMKSNSCLNSDSEIQYSCSEGTDSFVSRPCQFLQNALPLHCSSNQALLESRSKTGNTQISETHYCNYAIGETIPFQLIIESSI.

The protein belongs to the herpesviridae major capsid protein family. In terms of assembly, homomultimer. Makes the hexons and eleven out of twelve pentons. Interacts with triplex proteins 1/TRX1 and 2/TRX2; adjacent capsomers are linked together in groups of three by triplexes, heterotrimeric complexes composed of one molecule of TRX1 and two molecules of TRX2. Interacts with scaffold protein; this interaction allows efficient MCP transport to the host nucleus. Interacts with capsid vertex component 2/CVC2. Interacts with the small capsomere-interacting protein/SCP.

It localises to the virion. The protein localises to the host nucleus. Its function is as follows. Self-assembles to form an icosahedral capsid with a T=16 symmetry, about 200 nm in diameter, and consisting of 150 hexons and 12 pentons (total of 162 capsomers). Hexons form the edges and faces of the capsid and are each composed of six MCP molecules. In contrast, one penton is found at each of the 12 vertices. Eleven of the pentons are MCP pentamers, while the last vertex is occupied by the portal complex. The capsid is surrounded by a layer of proteinaceous material designated the tegument which, in turn, is enclosed in an envelope of host cell-derived lipids containing virus-encoded glycoproteins. The polypeptide is Major capsid protein (Human herpesvirus 6A (strain Uganda-1102) (HHV-6 variant A)).